The primary structure comprises 528 residues: DEAD-box ATP-dependent RNA helicase CshA (528 aa).

The Q motif motif lies at 2–30 (TTFRELGLSDSLLQSVESMGFEEATPIQA). The region spanning 33-203 (IPHALQGKDI…ERFMTEPQHI (171 aa)) is the Helicase ATP-binding domain. 46–53 (AQTGTGKT) provides a ligand contact to ATP. A DEAD box motif is present at residues 151 to 154 (DEAD). One can recognise a Helicase C-terminal domain in the interval 214–374 (NIQQFYLEVQ…RMDAPTLDEA (161 aa)). Residues 428–528 (TTPIALTSEP…RKHHSRKPQA (101 aa)) form a disordered region. Over residues 458-506 (DGNRNRSRDGRGGDGRNRDRNRDGRNRDGNRDRNREGSRDGNRGRRGEG) the composition is skewed to basic and acidic residues. Positions 518–528 (ERKHHSRKPQA) are enriched in basic residues.

Belongs to the DEAD box helicase family. CshA subfamily. As to quaternary structure, oligomerizes, may be a member of the RNA degradosome.

It localises to the cytoplasm. It carries out the reaction ATP + H2O = ADP + phosphate + H(+). In terms of biological role, DEAD-box RNA helicase possibly involved in RNA degradation. Unwinds dsRNA in both 5'- and 3'-directions, has RNA-dependent ATPase activity. The chain is DEAD-box ATP-dependent RNA helicase CshA from Bacillus thuringiensis (strain Al Hakam).